The sequence spans 227 residues: Phosphoribosylformylglycinamidine synthase subunit PurQ (227 aa).

The region spanning 3–225 (FAVIVLPGSN…VKNWRETHVT (223 aa)) is the Glutamine amidotransferase type-1 domain. C86 functions as the Nucleophile in the catalytic mechanism. Residues H194 and E196 contribute to the active site.

Part of the FGAM synthase complex composed of 1 PurL, 1 PurQ and 2 PurS subunits.

It is found in the cytoplasm. It carries out the reaction N(2)-formyl-N(1)-(5-phospho-beta-D-ribosyl)glycinamide + L-glutamine + ATP + H2O = 2-formamido-N(1)-(5-O-phospho-beta-D-ribosyl)acetamidine + L-glutamate + ADP + phosphate + H(+). The enzyme catalyses L-glutamine + H2O = L-glutamate + NH4(+). The protein operates within purine metabolism; IMP biosynthesis via de novo pathway; 5-amino-1-(5-phospho-D-ribosyl)imidazole from N(2)-formyl-N(1)-(5-phospho-D-ribosyl)glycinamide: step 1/2. In terms of biological role, part of the phosphoribosylformylglycinamidine synthase complex involved in the purines biosynthetic pathway. Catalyzes the ATP-dependent conversion of formylglycinamide ribonucleotide (FGAR) and glutamine to yield formylglycinamidine ribonucleotide (FGAM) and glutamate. The FGAM synthase complex is composed of three subunits. PurQ produces an ammonia molecule by converting glutamine to glutamate. PurL transfers the ammonia molecule to FGAR to form FGAM in an ATP-dependent manner. PurS interacts with PurQ and PurL and is thought to assist in the transfer of the ammonia molecule from PurQ to PurL. The sequence is that of Phosphoribosylformylglycinamidine synthase subunit PurQ from Bacillus subtilis (strain 168).